A 91-amino-acid polypeptide reads, in one-letter code: Small ribosomal subunit protein bS18 (91 aa).

Positions 1–21 are disordered; sequence MSDERTPQRSSGPRKKRPFQR. The segment covering 12 to 21 has biased composition (basic residues); it reads GPRKKRPFQR.

Belongs to the bacterial ribosomal protein bS18 family. As to quaternary structure, part of the 30S ribosomal subunit. Forms a tight heterodimer with protein bS6.

Functionally, binds as a heterodimer with protein bS6 to the central domain of the 16S rRNA, where it helps stabilize the platform of the 30S subunit. In Geotalea uraniireducens (strain Rf4) (Geobacter uraniireducens), this protein is Small ribosomal subunit protein bS18.